The primary structure comprises 474 residues: Aspartyl/glutamyl-tRNA(Asn/Gln) amidotransferase subunit B (474 aa).

The protein belongs to the GatB/GatE family. GatB subfamily. In terms of assembly, heterotrimer of A, B and C subunits.

The catalysed reaction is L-glutamyl-tRNA(Gln) + L-glutamine + ATP + H2O = L-glutaminyl-tRNA(Gln) + L-glutamate + ADP + phosphate + H(+). The enzyme catalyses L-aspartyl-tRNA(Asn) + L-glutamine + ATP + H2O = L-asparaginyl-tRNA(Asn) + L-glutamate + ADP + phosphate + 2 H(+). Its function is as follows. Allows the formation of correctly charged Asn-tRNA(Asn) or Gln-tRNA(Gln) through the transamidation of misacylated Asp-tRNA(Asn) or Glu-tRNA(Gln) in organisms which lack either or both of asparaginyl-tRNA or glutaminyl-tRNA synthetases. The reaction takes place in the presence of glutamine and ATP through an activated phospho-Asp-tRNA(Asn) or phospho-Glu-tRNA(Gln). The chain is Aspartyl/glutamyl-tRNA(Asn/Gln) amidotransferase subunit B from Limosilactobacillus fermentum (strain NBRC 3956 / LMG 18251) (Lactobacillus fermentum).